The sequence spans 161 residues: Peripheral myelin protein 22 (161 aa).

Met1 is a topological domain (cytoplasmic). The helical transmembrane segment at 2-31 (LLLLLGILFLHIAVLVLLFVSTIVSQWLVG) threads the bilayer. The Extracellular segment spans residues 32-64 (NGHTTDLWQNCTTSALGAVQHCYSSSVSEWLQS). A glycan (N-linked (GlcNAc...) asparagine) is linked at Asn41. A helical transmembrane segment spans residues 65 to 91 (VQATMILSVIFSVLALFLFFCQLFTLT). Residues 92 to 95 (KGGR) are Cytoplasmic-facing. Residues 96 to 119 (FYITGFFQILAGLCVMSAAAIYTV) traverse the membrane as a helical segment. The Extracellular segment spans residues 120-133 (RHSEWHVNTDYSYG). The helical transmembrane segment at 134 to 156 (FAYILAWVAFPLALLSGIIYVIL) threads the bilayer. Over 157-160 (RKRE) the chain is Cytoplasmic.

The protein belongs to the PMP-22/EMP/MP20 family. Post-translationally, ubiquitinated by the DCX(DCAF13) E3 ubiquitin ligase complex, leading to its degradation. In terms of tissue distribution, schwann cells of the peripheral nervous system. Expressed at growth arrest of mammalian fibroblasts.

It localises to the cell membrane. In terms of biological role, might be involved in growth regulation, and in myelinization in the peripheral nervous system. The polypeptide is Peripheral myelin protein 22 (Pmp22) (Mus musculus (Mouse)).